Reading from the N-terminus, the 465-residue chain is ATP-dependent rRNA helicase rrp3 (465 aa).

Positions 1 to 46 are disordered; sequence MSALKKRKITEKQPETNSDSEAESVSSRGSAKDETQTSGEEPAPAK. A compositionally biased stretch (polar residues) spans 15–29; it reads ETNSDSEAESVSSRG. The Q motif motif lies at 46 to 74; the sequence is KSFKELGIIDQLCEACENMGYKAPTPIQS. The Helicase ATP-binding domain maps to 77 to 248; it reads IPLALEGRDV…RASLSNPVRV (172 aa). Residue 90 to 97 coordinates ATP; the sequence is AETGSGKT. The DEAD box signature appears at 196–199; sequence DEAD. In terms of domain architecture, Helicase C-terminal spans 275–419; that stretch reads YLVYLLNEFA…EYQVEKDEVM (145 aa). Positions 436–465 are disordered; that stretch reads MKSFDEKKGARGKKFGKGKRSRDDMDQEEG. Residues 445-455 show a composition bias toward basic residues; the sequence is ARGKKFGKGKR.

This sequence belongs to the DEAD box helicase family. DDX47/RRP3 subfamily. Interacts with the SSU processome.

The protein localises to the nucleus. The enzyme catalyses ATP + H2O = ADP + phosphate + H(+). In terms of biological role, ATP-dependent rRNA helicase required for pre-ribosomal RNA processing. Involved in the maturation of the 35S-pre-rRNA and to its cleavage to mature 18S rRNA. This chain is ATP-dependent rRNA helicase rrp3, found in Emericella nidulans (strain FGSC A4 / ATCC 38163 / CBS 112.46 / NRRL 194 / M139) (Aspergillus nidulans).